The chain runs to 310 residues: tRNA uridine(34) hydroxylase (310 aa).

The 99-residue stretch at 127-225 (KDKNTIVVDT…YLEDMSKEES (99 aa)) folds into the Rhodanese domain. The active-site Cysteine persulfide intermediate is the Cys-185.

This sequence belongs to the TrhO family.

It catalyses the reaction uridine(34) in tRNA + AH2 + O2 = 5-hydroxyuridine(34) in tRNA + A + H2O. Catalyzes oxygen-dependent 5-hydroxyuridine (ho5U) modification at position 34 in tRNAs. In Prochlorococcus marinus subsp. pastoris (strain CCMP1986 / NIES-2087 / MED4), this protein is tRNA uridine(34) hydroxylase.